Consider the following 219-residue polypeptide: Probable transcription factor At1g55950 (219 aa).

The disordered stretch occupies residues 9–77; it reads ASHSLKSLMA…DEKMETEEEG (69 aa). Residues 17 to 30 show a composition bias toward basic residues; it reads MAKKNKRSQQKNKC. Residues 31–48 show a composition bias toward basic and acidic residues; it reads LKPEKDPSTVKRLLEDPP. A compositionally biased stretch (acidic residues) spans 65-77; sequence YGDDEKMETEEEG.

This sequence belongs to the GeBP family.

In Arabidopsis thaliana (Mouse-ear cress), this protein is Probable transcription factor At1g55950.